A 410-amino-acid chain; its full sequence is Testis-specific Y-encoded-like protein 6 (410 aa).

Disordered stretches follow at residues 1-31 and 46-69; these read MSLP…EKSK and PIVF…DGGH. S9 is modified (phosphoserine). The segment covering 18 to 31 has biased composition (basic and acidic residues); sequence EDPHQGQRSREKSK.

This sequence belongs to the nucleosome assembly protein (NAP) family.

The sequence is that of Testis-specific Y-encoded-like protein 6 (TSPYL6) from Homo sapiens (Human).